A 203-amino-acid chain; its full sequence is Imidazoleglycerol-phosphate dehydratase (203 aa).

This sequence belongs to the imidazoleglycerol-phosphate dehydratase family.

The protein resides in the cytoplasm. The catalysed reaction is D-erythro-1-(imidazol-4-yl)glycerol 3-phosphate = 3-(imidazol-4-yl)-2-oxopropyl phosphate + H2O. The protein operates within amino-acid biosynthesis; L-histidine biosynthesis; L-histidine from 5-phospho-alpha-D-ribose 1-diphosphate: step 6/9. This is Imidazoleglycerol-phosphate dehydratase from Helicobacter hepaticus (strain ATCC 51449 / 3B1).